The following is a 74-amino-acid chain: Kappa-stichotoxin-Shd5a (74 aa).

The first 22 residues, 1-22 (MKFQVIAAVLLIAFCLCVVVTA), serve as a signal peptide directing secretion. A propeptide spanning residues 23-39 (RMELQDVEDVENGFQKR) is cleaved from the precursor. The ShKT domain occupies 42-74 (CIDTIPQSRCTAFQCKHSMKYRLSFCRKTCGTC). 3 disulfide bridges follow: Cys-42–Cys-74, Cys-51–Cys-67, and Cys-56–Cys-71.

Belongs to the sea anemone type 1 potassium channel toxin family. Type 1a subfamily.

Its subcellular location is the secreted. It localises to the nematocyst. Functionally, inhibits voltage-gated potassium channels (Kv) with higher potency for Kv1.1/KCNA1 and Kv1.3/KCNA3. The sequence is that of Kappa-stichotoxin-Shd5a from Stichodactyla haddoni (Saddle carpet anemone).